Reading from the N-terminus, the 187-residue chain is ATP synthase subunit b (187 aa).

A helical transmembrane segment spans residues 36-53 (PYQWVSVAMLVLIAIMLW).

This sequence belongs to the ATPase B chain family. As to quaternary structure, F-type ATPases have 2 components, F(1) - the catalytic core - and F(0) - the membrane proton channel. F(1) has five subunits: alpha(3), beta(3), gamma(1), delta(1), epsilon(1). F(0) has four main subunits: a(1), b(2) and c(10-14). The alpha and beta chains form an alternating ring which encloses part of the gamma chain. F(1) is attached to F(0) by a central stalk formed by the gamma and epsilon chains, while a peripheral stalk is formed by the delta and b chains.

It localises to the cell inner membrane. Functionally, f(1)F(0) ATP synthase produces ATP from ADP in the presence of a proton or sodium gradient. F-type ATPases consist of two structural domains, F(1) containing the extramembraneous catalytic core and F(0) containing the membrane proton channel, linked together by a central stalk and a peripheral stalk. During catalysis, ATP synthesis in the catalytic domain of F(1) is coupled via a rotary mechanism of the central stalk subunits to proton translocation. Its function is as follows. Component of the F(0) channel, it forms part of the peripheral stalk, linking F(1) to F(0). The protein is ATP synthase subunit b of Erythrobacter litoralis (strain HTCC2594).